The chain runs to 1265 residues: 1-phosphatidylinositol 4,5-bisphosphate phosphodiesterase gamma-2 (1265 aa).

The 112-residue stretch at 20–131 (RALELGTVMT…WLSGLKILHQ (112 aa)) folds into the PH domain. In terms of domain architecture, PI-PLC X-box spans 312–456 (QDMNNPLSHY…LREKIIIKHK (145 aa)). Catalysis depends on residues H327 and H372. SH2 domains are found at residues 532 to 635 (WFHK…TDPV) and 646 to 735 (WYYD…RYPV). Phosphotyrosine; by BTK occurs at positions 753 and 759. In terms of domain architecture, SH3 spans 769 to 829 (MPQRTVKALY…PSNYVEDISA (61 aa)). One can recognise a PI-PLC Y-box domain in the interval 930–1044 (LSDLVVYCKP…GYVLQPESMR (115 aa)). The C2 domain occupies 1038–1169 (LQPESMRSEK…SGFRSVPLKN (132 aa)). A Phosphotyrosine; by BTK modification is found at Y1197. A phosphotyrosine mark is found at Y1217 and Y1245.

Part of a complex composed of EEIG1, TNFRSF11A/RANK, PLCG2, GAB2, TEC and BTK; complex formation increases in the presence of TNFSF11/RANKL. Interacts (via SH2 domain) with CSF1R (tyrosine phosphorylated). Interacts constitutively with THEMIS2. Requires Ca(2+) as cofactor. Post-translationally, phosphorylated on tyrosine residues by CSF1R. Phosphorylated on tyrosine residues by BTK and SYK; upon ligand-induced activation of a variety of growth factor receptors and immune system receptors. Phosphorylation leads to increased phospholipase activity.

It is found in the membrane raft. It catalyses the reaction a 1,2-diacyl-sn-glycero-3-phospho-(1D-myo-inositol-4,5-bisphosphate) + H2O = 1D-myo-inositol 1,4,5-trisphosphate + a 1,2-diacyl-sn-glycerol + H(+). The production of the second messenger molecules diacylglycerol (DAG) and inositol 1,4,5-trisphosphate (IP3) is mediated by activated phosphatidylinositol-specific phospholipase C enzymes. It is a crucial enzyme in transmembrane signaling. This Rattus norvegicus (Rat) protein is 1-phosphatidylinositol 4,5-bisphosphate phosphodiesterase gamma-2.